The following is a 70-amino-acid chain: Putative membrane protein insertion efficiency factor (70 aa).

Belongs to the UPF0161 family.

It localises to the cell inner membrane. Its function is as follows. Could be involved in insertion of integral membrane proteins into the membrane. This Desulforapulum autotrophicum (strain ATCC 43914 / DSM 3382 / VKM B-1955 / HRM2) (Desulfobacterium autotrophicum) protein is Putative membrane protein insertion efficiency factor.